The following is a 129-amino-acid chain: Large ribosomal subunit protein bL19 (129 aa).

Belongs to the bacterial ribosomal protein bL19 family.

In terms of biological role, this protein is located at the 30S-50S ribosomal subunit interface and may play a role in the structure and function of the aminoacyl-tRNA binding site. The protein is Large ribosomal subunit protein bL19 of Burkholderia mallei (strain NCTC 10247).